Consider the following 193-residue polypeptide: MNLIPTVIEQTNRGERAYDIYSRLLKDRIIMLGSAIDDNVANSIVSQLLFLESQDPEKDIHIYINSPGGSITAGMAIYDTMQFIKPQVSTICIGMAASMGAFLLAAGEKGKRYALPNSEVMIHQPLGGAQGQATEIEIAAKRILFLREKLNQILADRTGQPLEVLQRDTDRDNFMTAEKALEYGLIDKIFTNR.

Ser-98 acts as the Nucleophile in catalysis. His-123 is an active-site residue.

This sequence belongs to the peptidase S14 family. Fourteen ClpP subunits assemble into 2 heptameric rings which stack back to back to give a disk-like structure with a central cavity, resembling the structure of eukaryotic proteasomes.

The protein resides in the cytoplasm. It catalyses the reaction Hydrolysis of proteins to small peptides in the presence of ATP and magnesium. alpha-casein is the usual test substrate. In the absence of ATP, only oligopeptides shorter than five residues are hydrolyzed (such as succinyl-Leu-Tyr-|-NHMec, and Leu-Tyr-Leu-|-Tyr-Trp, in which cleavage of the -Tyr-|-Leu- and -Tyr-|-Trp bonds also occurs).. Cleaves peptides in various proteins in a process that requires ATP hydrolysis. Has a chymotrypsin-like activity. Plays a major role in the degradation of misfolded proteins. This is ATP-dependent Clp protease proteolytic subunit 2 from Bacillus cereus (strain ATCC 14579 / DSM 31 / CCUG 7414 / JCM 2152 / NBRC 15305 / NCIMB 9373 / NCTC 2599 / NRRL B-3711).